A 652-amino-acid polypeptide reads, in one-letter code: Phosphoglucomutase 1, chloroplastic (652 aa).

Residues Met-1 to Arg-84 constitute a chloroplast transit peptide. Arg-118 and Ser-211 together coordinate alpha-D-glucose 1,6-bisphosphate. The active-site Phosphoserine intermediate is the Ser-211. The Mg(2+) site is built by Ser-211, Asp-376, Asp-378, and Asp-380. Ser-211 is modified (phosphoserine). Alpha-D-glucose 1,6-bisphosphate-binding residues include Asp-380, Arg-381, Thr-443, Glu-462, Ser-464, and Lys-475.

Belongs to the phosphohexose mutase family. The cofactor is Mg(2+).

Its subcellular location is the plastid. The protein localises to the chloroplast. The catalysed reaction is alpha-D-glucose 1-phosphate = alpha-D-glucose 6-phosphate. It carries out the reaction O-phospho-L-seryl-[protein] + alpha-D-glucose 1-phosphate = alpha-D-glucose 1,6-bisphosphate + L-seryl-[protein]. The enzyme catalyses alpha-D-glucose 1,6-bisphosphate + L-seryl-[protein] = O-phospho-L-seryl-[protein] + alpha-D-glucose 6-phosphate. With respect to regulation, inhibited by the Calvin cycle intermediates fructose-1,6-bisphosphate and ribulose-1,5-bisphosphate. Functionally, catalyzes the reversible isomerization of alpha-D-glucose 1-phosphate to alpha-D-glucose 6-phosphate. The mechanism proceeds via the intermediate compound alpha-D-glucose 1,6-bisphosphate. This enzyme participates in both the breakdown and synthesis of glucose. Required for sucrose production and accumulation necessary during plant development. Promotes gravitropic responses, negative in shoots but positive in roots, by facilitating starch granules (statoliths) formation. This is Phosphoglucomutase 1, chloroplastic from Marchantia polymorpha (Common liverwort).